The chain runs to 84 residues: Small ribosomal subunit protein uS17 (84 aa).

This sequence belongs to the universal ribosomal protein uS17 family. Part of the 30S ribosomal subunit.

Functionally, one of the primary rRNA binding proteins, it binds specifically to the 5'-end of 16S ribosomal RNA. This Nitrosomonas europaea (strain ATCC 19718 / CIP 103999 / KCTC 2705 / NBRC 14298) protein is Small ribosomal subunit protein uS17.